A 644-amino-acid polypeptide reads, in one-letter code: 3D-(3,5/4)-trihydroxycyclohexane-1,2-dione hydrolase (644 aa).

Glu65 contacts thiamine diphosphate. The segment at 442–522 (SLPGDLQRMW…INVLLFDNSG (81 aa)) is thiamine pyrophosphate binding. Residues Asp493 and Asn520 each contribute to the Mg(2+) site.

This sequence belongs to the TPP enzyme family. The cofactor is Mg(2+). Thiamine diphosphate is required as a cofactor.

It catalyses the reaction 3D-3,5/4-trihydroxycyclohexane-1,2-dione + H2O = 5-deoxy-D-glucuronate + H(+). It functions in the pathway polyol metabolism; myo-inositol degradation into acetyl-CoA; acetyl-CoA from myo-inositol: step 3/7. Involved in the cleavage of the C1-C2 bond of 3D-(3,5/4)-trihydroxycyclohexane-1,2-dione (THcHDO) to yield 5-deoxy-glucuronate (5DG). The protein is 3D-(3,5/4)-trihydroxycyclohexane-1,2-dione hydrolase of Bacillus cereus (strain AH820).